The following is a 662-amino-acid chain: uncharacterized protein (662 aa).

Disordered stretches follow at residues 1 to 94 (MSQR…NENN), 107 to 237 (DHNN…VKYH), 288 to 328 (ETTS…TPSA), 406 to 440 (QSSF…PIQM), and 506 to 580 (QNSI…MVSP). A compositionally biased stretch (low complexity) spans 25-49 (TTTTTPTPTTTTTTTSSLSSSTSST). Residues 77-87 (DNIKLDNEKTF) are compositionally biased toward basic and acidic residues. The segment covering 109–161 (NNNNNNNNNNNNNNNNNNNNNNNNNNNNNNNNNNNNNNNNNNNNNNNNNNNNN) has biased composition (low complexity). Residues 162–176 (DTQKGTNKNENNCTD) show a composition bias toward polar residues. Residues 183–196 (STSTTSSSETGSST) show a composition bias toward low complexity. Residues 203–212 (KTPQSCLKKS) are compositionally biased toward polar residues. A compositionally biased stretch (low complexity) spans 213 to 224 (NNNNNDNNNNNN). Basic residues predominate over residues 226–235 (KTPRSTKKVK). Composition is skewed to low complexity over residues 288-308 (ETTS…TPIP), 413-434 (PTNN…TTTP), 515-526 (PTKSSSSTSIQQ), and 535-575 (NINN…NNNN).

This is an uncharacterized protein from Dictyostelium discoideum (Social amoeba).